Reading from the N-terminus, the 1382-residue chain is ABC-type transporter atr1 (1382 aa).

Residues 1–12 are compositionally biased toward basic and acidic residues; that stretch reads MRFRSDSRADHQ. The interval 1–56 is disordered; that stretch reads MRFRSDSRADHQHPKKQGSMDPDTIQALKYQDRSSSSSSNNKPKEKVGSASTSPSP. An N-linked (GlcNAc...) asparagine glycan is attached at N62. The next 6 membrane-spanning stretches (helical) occupy residues 101–121, 159–179, 233–253, 259–279, 339–359, and 374–394; these read LFGTGMAIAAGAAQPLMNIFI, LILLYLGIGMFFASMLYMAVF, LPMAIMYFSTFVTAAAVAFAF, LVLLPIAPLILLAGGVMGALT, GVGVGALLFIIYAGYALAFFY, and IVSVVFANFAGAFAIANLFSM. The ABC transmembrane type-1 1 domain occupies 101–400; sequence LFGTGMAIAA…LFSMIENFTM (300 aa). A glycan (N-linked (GlcNAc...) asparagine) is linked at N397. The region spanning 445–688 is the ABC transporter 1 domain; sequence LKLDHVHFAY…PNGTFASMLR (244 aa). 480-487 contacts ATP; that stretch reads GLSGSGKS. N680 carries an N-linked (GlcNAc...) asparagine glycan. The tract at residues 738–768 is disordered; sequence SVKPKDPSKNFEPPGESYASPAADGVKQDAP. Residues 797–1094 form the ABC transmembrane type-1 2 domain; that stretch reads LGSLCAAIIG…IFNYSADFSS (298 aa). The helical transmembrane segment at 800 to 820 threads the bilayer; it reads LCAAIIGAVYPVYAILFGTAI. N-linked (GlcNAc...) asparagine glycosylation is present at N827. Residues 848-868 traverse the membrane as a helical segment; sequence ISSGSFFIVAVGCAFISFYHV. N903 is a glycosylation site (N-linked (GlcNAc...) asparagine). Helical transmembrane passes span 911–931 and 951–973; these read SLSVLSQGIYGGVGPTLGSIV and LALVVIASTPLTITAGLLRLRVL. A glycan (N-linked (GlcNAc...) asparagine) is linked at N1020. The next 2 membrane-spanning stretches (helical) occupy residues 1034-1054 and 1067-1087; these read VLFGLSQCVQLLVTALAFWYG and GFFTILISVVYGSVQAGNIFN. The ABC transporter 2 domain occupies 1136–1377; it reads IALKEVTFRY…DGLFALMARL (242 aa). An ATP-binding site is contributed by 1171-1178; it reads GGSGSGKS. N-linked (GlcNAc...) asparagine glycosylation occurs at N1324.

Belongs to the ABC transporter superfamily. ABCB family. Multidrug resistance exporter (TC 3.A.1.201) subfamily.

It is found in the cell membrane. Functionally, ABC-type transporter; part of the gene cluster that mediates the biosynthesis of the glycolipid biosurfactant ustilagic acid (UA). UA is a secreted cellobiose glycolipid that is toxic for many microorganisms and confers biocontrol activity to U.maydis. Export of UA is presumably catalyzed by the ABC transporter atr1. Atr1 appears to be quite unspecific, as many of the UA derivatives produced by cluster mutant strains are readily exported. In Mycosarcoma maydis (Corn smut fungus), this protein is ABC-type transporter atr1.